We begin with the raw amino-acid sequence, 211 residues long: Phosphoserine phosphatase 1 (211 aa).

Catalysis depends on His9, which acts as the Tele-phosphohistidine intermediate. His150 is an active-site residue.

It belongs to the histidine phosphatase superfamily. Metal-independent phosphoserine phosphatase family. As to quaternary structure, homodimer. Can also form a heterodimer with PspB.

It catalyses the reaction O-phospho-L-serine + H2O = L-serine + phosphate. It carries out the reaction O-phospho-D-serine + H2O = D-serine + phosphate. The protein operates within amino-acid biosynthesis; L-serine biosynthesis; L-serine from 3-phospho-D-glycerate: step 3/3. Activity is not inhibited by EDTA in vitro, nor enhanced by the addition of Mg(2+). Its function is as follows. Catalyzes the dephosphorylation of L-phosphoserine to serine and inorganic phosphate. Is poorly or not active toward D-phosphoserine, DL-phosphothreonine, 3-phosphoglycerate, para-nitrophenylphosphate, and fructose-6-phosphate. Does not display phosphoglycerate mutase activity. The chain is Phosphoserine phosphatase 1 (pspA) from Hydrogenobacter thermophilus (strain DSM 6534 / IAM 12695 / TK-6).